The following is a 675-amino-acid chain: Myosin-binding protein 3 (675 aa).

The helical transmembrane segment at Ile17 to Asn37 threads the bilayer. Disordered regions lie at residues Leu225–Thr274 and Ser286–Ser315. Basic and acidic residues predominate over residues Ala238–Asp251. In terms of domain architecture, GTD-binding spans Arg355–Arg453. Residues Cys474–Val496 show a composition bias toward acidic residues. Disordered regions lie at residues Cys474 to Asp497, Asp542 to Gly565, and Ala582 to Ser605. Residues Ser596–Ser605 are compositionally biased toward basic and acidic residues. Residues Ser605–Asn633 are a coiled coil.

In terms of assembly, interacts with myosin XI-K.

The protein resides in the membrane. Its function is as follows. Membrane-anchored myosin receptors that define a distinct, plant-specific transport vesicle compartment. This is Myosin-binding protein 3 from Arabidopsis thaliana (Mouse-ear cress).